Consider the following 616-residue polypeptide: Chaperone protein HscA (616 aa).

It belongs to the heat shock protein 70 family.

In terms of biological role, chaperone involved in the maturation of iron-sulfur cluster-containing proteins. Has a low intrinsic ATPase activity which is markedly stimulated by HscB. Involved in the maturation of IscU. This is Chaperone protein HscA from Escherichia coli (strain SMS-3-5 / SECEC).